We begin with the raw amino-acid sequence, 688 residues long: Glycine--tRNA ligase beta subunit (688 aa).

The protein belongs to the class-II aminoacyl-tRNA synthetase family. As to quaternary structure, tetramer of two alpha and two beta subunits.

It is found in the cytoplasm. It catalyses the reaction tRNA(Gly) + glycine + ATP = glycyl-tRNA(Gly) + AMP + diphosphate. The protein is Glycine--tRNA ligase beta subunit of Aliivibrio salmonicida (strain LFI1238) (Vibrio salmonicida (strain LFI1238)).